Consider the following 598-residue polypeptide: Thiol:disulfide interchange protein DsbD (598 aa).

Residues Met-1–Ala-19 form the signal peptide. The cysteines at positions 122 and 128 are disulfide-linked. Residues Asp-147 to Ala-187 form a disordered region. Residues Phe-165–Ala-176 show a composition bias toward pro residues. The next 7 membrane-spanning stretches (helical) occupy residues Leu-197 to Val-217, Leu-242 to Val-262, Tyr-277 to Phe-297, Ile-330 to Ile-350, Leu-356 to Leu-376, Trp-391 to Leu-411, and Leu-423 to Thr-443. Cys-216 and Cys-338 are disulfide-bonded. Residues Leu-459 to Ala-598 form the Thioredoxin domain. Cysteines 513 and 516 form a disulfide.

It belongs to the thioredoxin family. DsbD subfamily.

It localises to the cell inner membrane. The enzyme catalyses [protein]-dithiol + NAD(+) = [protein]-disulfide + NADH + H(+). It catalyses the reaction [protein]-dithiol + NADP(+) = [protein]-disulfide + NADPH + H(+). Its function is as follows. Required to facilitate the formation of correct disulfide bonds in some periplasmic proteins and for the assembly of the periplasmic c-type cytochromes. Acts by transferring electrons from cytoplasmic thioredoxin to the periplasm. This transfer involves a cascade of disulfide bond formation and reduction steps. In Klebsiella pneumoniae subsp. pneumoniae (strain ATCC 700721 / MGH 78578), this protein is Thiol:disulfide interchange protein DsbD.